Here is a 38-residue protein sequence, read N- to C-terminus: Zinc-containing ferredoxin (38 aa).

A compositionally biased stretch (polar residues) spans 1–11; it reads GIDPNFRTSRP. Residues 1–38 are disordered; the sequence is GIDPNFRTSRPVTGDHAGHKVYAPADPPVKEKALGIHG. The segment at 1–38 is N-terminal extension; sequence GIDPNFRTSRPVTGDHAGHKVYAPADPPVKEKALGIHG. Residues histidine 16 and histidine 19 each coordinate Zn(2+). Over residues 28–38 the composition is skewed to basic and acidic residues; the sequence is PVKEKALGIHG. An N6-methyllysine modification is found at lysine 30. Histidine 37 contacts Zn(2+).

[3Fe-4S] cluster serves as cofactor. It depends on [4Fe-4S] cluster as a cofactor. The cofactor is Zn(2+).

Ferredoxins are iron-sulfur proteins that transfer electrons in a wide variety of metabolic reactions. This Metallosphaera prunae protein is Zinc-containing ferredoxin (zfx).